A 561-amino-acid chain; its full sequence is uncharacterized protein (561 aa).

Residues 1-11 (MSQVSLPSQLK) are compositionally biased toward polar residues. Disordered stretches follow at residues 1 to 22 (MSQV…SRCR) and 522 to 561 (CSLP…IMLP). Low complexity predominate over residues 541 to 561 (QQPQQAQAEQAQQPQQQIMLP).

The protein to Synechocystis PCC 6803 sll0335 and to M.tuberculosis Rv2567.

This is an uncharacterized protein from Mycobacterium leprae (strain TN).